The chain runs to 227 residues: Isopentenyl-diphosphate Delta-isomerase 1 (227 aa).

Position 36 (Lys36) interacts with substrate. Residues His40 and His51 each contribute to the Mg(2+) site. The 151-residue stretch at 49-199 folds into the Nudix hydrolase domain; the sequence is LLHRAFSVFL…EVKLTPWFKI (151 aa). Substrate contacts are provided by Arg70 and Lys74. Cys86 is a catalytic residue. A substrate-binding site is contributed by Ser87. Residues Glu146 and Glu148 each contribute to the Mg(2+) site. Residue Glu148 is part of the active site. The residue at position 176 (Lys176) is an N6-acetyllysine. The Microbody targeting signal motif lies at 225–227; it reads HRM.

It belongs to the IPP isomerase type 1 family. As to quaternary structure, monomer. Mg(2+) is required as a cofactor.

Its subcellular location is the peroxisome. The enzyme catalyses isopentenyl diphosphate = dimethylallyl diphosphate. It functions in the pathway isoprenoid biosynthesis; dimethylallyl diphosphate biosynthesis; dimethylallyl diphosphate from isopentenyl diphosphate: step 1/1. Functionally, catalyzes the 1,3-allylic rearrangement of the homoallylic substrate isopentenyl (IPP) to its highly electrophilic allylic isomer, dimethylallyl diphosphate (DMAPP). In Mesocricetus auratus (Golden hamster), this protein is Isopentenyl-diphosphate Delta-isomerase 1 (IDI1).